Consider the following 148-residue polypeptide: Secretory phospholipase A2 (148 aa).

The first 23 residues, 1–23, serve as a signal peptide directing secretion; the sequence is MKLSVLLALGASSLAAAAPAATA. N-linked (GlcNAc...) asparagine glycosylation occurs at Asn61. A disulfide bridge links Cys62 with Cys78. His81 is an active-site residue. Residue Asp82 coordinates Ca(2+).

The protein belongs to the phospholipase A2 family. Ca(2+) serves as cofactor.

It localises to the secreted. The catalysed reaction is a 1,2-diacyl-sn-glycero-3-phosphocholine + H2O = a 1-acyl-sn-glycero-3-phosphocholine + a fatty acid + H(+). Functionally, secretory phospholipase that catalyzes the calcium-dependent hydrolysis of the 2-acyl groups in 3-sn-phosphoglycerides. Increases the ability to utilize host-derived nutrients and lipids, and promotes lipid dropplets accumulation. Plays a role in virulence. This Arthroderma benhamiae (strain ATCC MYA-4681 / CBS 112371) (Trichophyton mentagrophytes) protein is Secretory phospholipase A2.